We begin with the raw amino-acid sequence, 93 residues long: Acylphosphatase (93 aa).

An Acylphosphatase-like domain is found at 5 to 93 (AKQIVVRGRV…PNFRGFQVTG (89 aa)). Residues Arg20 and Asn38 contribute to the active site.

It belongs to the acylphosphatase family.

It catalyses the reaction an acyl phosphate + H2O = a carboxylate + phosphate + H(+). The sequence is that of Acylphosphatase (acyP) from Lacticaseibacillus paracasei (strain ATCC 334 / BCRC 17002 / CCUG 31169 / CIP 107868 / KCTC 3260 / NRRL B-441) (Lactobacillus paracasei).